We begin with the raw amino-acid sequence, 269 residues long: MHALPRYAVFGNPAAHSKSPQIHQQFALQEGVDIEYGRICADIGGFAQAVSTFFETGGCGANVTVPFKQEAFHLADEHSDRALAAGAVNTLVWLEDGRIRGDNTDGIGLANDITQVKNIAIEGKTILLLGAGGAVRGVIPVLKEHRPARIVIANRTRAKAEELARLFGIEAVPMADVNGGFDIIINGTSGGLSGQLPAVSPKIFRDCRLAYDMVYGEAAKPFLDFARQSGAKKTADGLGMLVGQAAASYALWRGFKPDIRPVIEHMKAL.

Shikimate-binding positions include 17 to 19 (SKS) and Thr64. Lys68 serves as the catalytic Proton acceptor. Asp80 is a binding site for NADP(+). Residues Asn89 and Asp105 each contribute to the shikimate site. Residues 130–134 (GAGGA), 154–159 (NRTRAK), and Met213 each bind NADP(+). Residue Tyr215 participates in shikimate binding. Gly237 contributes to the NADP(+) binding site.

Belongs to the shikimate dehydrogenase family. Homodimer.

The enzyme catalyses shikimate + NADP(+) = 3-dehydroshikimate + NADPH + H(+). It participates in metabolic intermediate biosynthesis; chorismate biosynthesis; chorismate from D-erythrose 4-phosphate and phosphoenolpyruvate: step 4/7. Functionally, involved in the biosynthesis of the chorismate, which leads to the biosynthesis of aromatic amino acids. Catalyzes the reversible NADPH linked reduction of 3-dehydroshikimate (DHSA) to yield shikimate (SA). The chain is Shikimate dehydrogenase (NADP(+)) from Neisseria gonorrhoeae (strain ATCC 700825 / FA 1090).